The chain runs to 779 residues: Endonuclease MutS2 (779 aa).

Gly-328–Thr-335 contributes to the ATP binding site. The Smr domain maps to Leu-704–Gly-779.

The protein belongs to the DNA mismatch repair MutS family. MutS2 subfamily. As to quaternary structure, homodimer. Binds to stalled ribosomes, contacting rRNA.

Endonuclease that is involved in the suppression of homologous recombination and thus may have a key role in the control of bacterial genetic diversity. Its function is as follows. Acts as a ribosome collision sensor, splitting the ribosome into its 2 subunits. Detects stalled/collided 70S ribosomes which it binds and splits by an ATP-hydrolysis driven conformational change. Acts upstream of the ribosome quality control system (RQC), a ribosome-associated complex that mediates the extraction of incompletely synthesized nascent chains from stalled ribosomes and their subsequent degradation. Probably generates substrates for RQC. This Streptococcus pyogenes serotype M5 (strain Manfredo) protein is Endonuclease MutS2.